The primary structure comprises 232 residues: MKKLENLLFDRFGLVFKDVSLLETAFTHTSYANEHRLLKISHNERLEFLGDAVLQLIISEYLFEKYPKRPEGDLTKLRSTIVREESLAGFSRDCQFDRFIKLGKGEEKSGGRERETILGDLFEAFLGALLLDKGLEVVKNFIYQVMIPKVEAGDFEQVTDYKTKLQELLQSNGDVEILYQVVSESGPAHAKNFEVSVSVDGRLVGKGQGRSKKLAEQEAAKNAFEKENHSCI.

Residues 5 to 134 (ENLLFDRFGL…FLGALLLDKG (130 aa)) enclose the RNase III domain. Residue Glu-47 participates in Mg(2+) binding. Asp-51 is an active-site residue. Positions 120 and 123 each coordinate Mg(2+). Glu-123 is a catalytic residue. In terms of domain architecture, DRBM spans 160-229 (DYKTKLQELL…AKNAFEKENH (70 aa)).

The protein belongs to the ribonuclease III family. Homodimer. Mg(2+) serves as cofactor.

The protein resides in the cytoplasm. It carries out the reaction Endonucleolytic cleavage to 5'-phosphomonoester.. Digests double-stranded RNA. Involved in the processing of primary rRNA transcript to yield the immediate precursors to the large and small rRNAs (23S and 16S). Processes some mRNAs, and tRNAs when they are encoded in the rRNA operon. Processes pre-crRNA and tracrRNA of type II CRISPR loci if present in the organism. This Streptococcus gordonii (strain Challis / ATCC 35105 / BCRC 15272 / CH1 / DL1 / V288) protein is Ribonuclease 3.